The chain runs to 473 residues: MHANVYIPEEFLTHIESIMPSHLDMASFVASCQKPLRKSIRVNTLKISVEDFLVRAKEKGWELEPVPWCETGFWITADESEAPLGNTAEHMSGLFYIQEASSMMPPSALFQGEADYQAVLDTAAAPGSKTTQIAALMNNRGVLVANEYAASRVKVLHANIERCGVRNAALSNFDGRVFGGWLPEQFDAVLLDAPCSGEGTIRKDADAMKNWTYQSVVDIADTQKDLIESAFHALKPNGVLVYSTCTLSTEENQQVCHHLKETFGDAVEFESLESLFDNAKATTTEEGFLHIFPQVYDSEGFFVARIRKLASVTPPEVKKRLGKFPFEKASKKAQQEVAEQLLGALDIELPSDTQVWIRDKDVWLFPEALEPMIGEFRFSRMGIKIAETHKKGYRWQHQVATTLATGNEANIVDLSIEDAREWFMGRDVRPEGLSGEGEVLVKYNGAIIGLGKWVGNRVKNGLPRELVRDKNLF.

S-adenosyl-L-methionine contacts are provided by residues 123-129, Glu-147, Asp-174, and Asp-192; that span reads AAAPGSK. The active-site Nucleophile is the Cys-245.

It belongs to the class I-like SAM-binding methyltransferase superfamily. RsmB/NOP family.

It localises to the cytoplasm. It catalyses the reaction cytidine(1407) in 16S rRNA + S-adenosyl-L-methionine = 5-methylcytidine(1407) in 16S rRNA + S-adenosyl-L-homocysteine + H(+). Specifically methylates the cytosine at position 1407 (m5C1407) of 16S rRNA. This Vibrio atlanticus (strain LGP32) (Vibrio splendidus (strain Mel32)) protein is Ribosomal RNA small subunit methyltransferase F.